The sequence spans 309 residues: uncharacterized protein (309 aa).

Composition is skewed to pro residues over residues 1–17 and 24–51; these read MTSR…PSPP and SPVP…PTPR. 2 disordered regions span residues 1-174 and 216-240; these read MTSR…PPGV and PPDL…PLHA. Over residues 67–83 the composition is skewed to low complexity; sequence LRSSPSSALNASRGAPS. Positions 84-112 are enriched in pro residues; it reads TSPPPSSSPPSSPASTPPSRTPSPTPTAP. Composition is skewed to low complexity over residues 113–125 and 135–144; these read ASPV…TPAS and APSSSAALSS. Residues 160 to 174 show a composition bias toward pro residues; the sequence is PPPPLPPPLQPPPGV. A helical transmembrane segment spans residues 278–298; that stretch reads LFLLFTLLSIHFSPFPIFILL.

It is found in the host membrane. This is an uncharacterized protein from Vitis vinifera (Grape).